A 124-amino-acid chain; its full sequence is Ribonuclease pancreatic (124 aa).

The interval 1–24 is disordered; the sequence is KETAAAKFQRQHMDSSTSSASSSN. Lysine 7 and arginine 10 together coordinate substrate. Histidine 12 serves as the catalytic Proton acceptor. 4 disulfides stabilise this stretch: cysteine 26–cysteine 84, cysteine 40–cysteine 95, cysteine 58–cysteine 110, and cysteine 65–cysteine 72. Residue asparagine 34 is glycosylated (N-linked (GlcNAc...) asparagine; in river-breed only). Substrate is bound by residues 41–45, lysine 66, and arginine 85; that span reads KPVNT. Residue histidine 119 is the Proton donor of the active site.

Belongs to the pancreatic ribonuclease family. In terms of assembly, monomer. Interacts with and forms tight 1:1 complexes with RNH1. Dimerization of two such complexes may occur. Interaction with RNH1 inhibits this protein. Swamp breed ribonuclease do not bind carbohydrate, but there is evidence of a polymorphic form that does. As to expression, pancreas.

It is found in the secreted. It carries out the reaction an [RNA] containing cytidine + H2O = an [RNA]-3'-cytidine-3'-phosphate + a 5'-hydroxy-ribonucleotide-3'-[RNA].. The enzyme catalyses an [RNA] containing uridine + H2O = an [RNA]-3'-uridine-3'-phosphate + a 5'-hydroxy-ribonucleotide-3'-[RNA].. In terms of biological role, endonuclease that catalyzes the cleavage of RNA on the 3' side of pyrimidine nucleotides. Acts on single-stranded and double-stranded RNA. The sequence is that of Ribonuclease pancreatic (RNASE1) from Bubalus bubalis (Domestic water buffalo).